Reading from the N-terminus, the 42-residue chain is Photosystem II reaction center protein J (42 aa).

A helical membrane pass occupies residues 10 to 30 (IPLWLIGTVVGSLAIGLLAIF).

Belongs to the PsbJ family. PSII is composed of 1 copy each of membrane proteins PsbA, PsbB, PsbC, PsbD, PsbE, PsbF, PsbH, PsbI, PsbJ, PsbK, PsbL, PsbM, PsbT, PsbX, PsbY, PsbZ, Psb30/Ycf12, at least 3 peripheral proteins of the oxygen-evolving complex and a large number of cofactors. It forms dimeric complexes.

The protein resides in the plastid. Its subcellular location is the chloroplast thylakoid membrane. Its function is as follows. One of the components of the core complex of photosystem II (PSII). PSII is a light-driven water:plastoquinone oxidoreductase that uses light energy to abstract electrons from H(2)O, generating O(2) and a proton gradient subsequently used for ATP formation. It consists of a core antenna complex that captures photons, and an electron transfer chain that converts photonic excitation into a charge separation. This chain is Photosystem II reaction center protein J, found in Stigeoclonium helveticum (Green alga).